Consider the following 682-residue polypeptide: Potassium-transporting ATPase ATP-binding subunit (682 aa).

The next 4 helical transmembrane spans lie at 34 to 54 (PVMFIVWIGSLLTTCISIAMA), 62 to 82 (ALFSAAISGWLWVTVLFANFA), 219 to 239 (IALTILLIALTIVFLLATATL), and 254 to 274 (VLVALLVCLIPTTIGGLLSAI). Asp-307 acts as the 4-aspartylphosphate intermediate in catalysis. ATP-binding positions include Asp-344, Glu-348, 377–384 (FTAQSRMS), and Lys-395. Positions 518 and 522 each coordinate Mg(2+). The next 3 helical transmembrane spans lie at 588–608 (FAIIPAAFAATYPQLNALNIM), 616–636 (AILSAVIFNALIIVFLIPLAL), and 662–682 (LLVPFIGIKVIDLLLTICGLV).

The protein belongs to the cation transport ATPase (P-type) (TC 3.A.3) family. Type IA subfamily. The system is composed of three essential subunits: KdpA, KdpB and KdpC.

It localises to the cell inner membrane. The enzyme catalyses K(+)(out) + ATP + H2O = K(+)(in) + ADP + phosphate + H(+). Functionally, part of the high-affinity ATP-driven potassium transport (or Kdp) system, which catalyzes the hydrolysis of ATP coupled with the electrogenic transport of potassium into the cytoplasm. This subunit is responsible for energy coupling to the transport system and for the release of the potassium ions to the cytoplasm. This Escherichia coli O81 (strain ED1a) protein is Potassium-transporting ATPase ATP-binding subunit.